An 803-amino-acid chain; its full sequence is Dynein axonemal intermediate chain 4 (803 aa).

Polar residues predominate over residues 1–33; it reads MPSSPTSTRKQTNFTASVSAQSRKSISFGNPKS. 3 disordered regions span residues 1–41, 88–109, and 143–163; these read MPSS…GYAG, LYHP…SQEG, and STVS…LEDP. The segment covering 143 to 155 has biased composition (low complexity); the sequence is STVSKSSISTTES. WD repeat units follow at residues 492–532, 541–589, 616–656, 660–700, 703–742, and 748–787; these read QSPY…NTPV, KHLG…DCHD, SRQA…QYLE, GHKG…PFFT, PTTY…LDPL, and NPGI…TPTE.

As to quaternary structure, part of the multisubunit axonemal dynein complex formed at least of two heavy chains and a number of intermediate and light chains. Associated with axonemal dynein subunits such as, DNAH2, DNAI3, and DYNLT1. Interacts with DYNLT1.

Its subcellular location is the cytoplasm. It localises to the cytoskeleton. It is found in the flagellum axoneme. The protein localises to the cilium axoneme. The protein resides in the dynein axonemal particle. Its function is as follows. Plays a critical role in the assembly of axonemal dynein complex, thereby playing a role in ciliary motility. In Rattus norvegicus (Rat), this protein is Dynein axonemal intermediate chain 4.